Here is a 269-residue protein sequence, read N- to C-terminus: Energy-coupling factor transporter ATP-binding protein EcfA1 (269 aa).

Positions 8–242 (ITFNHVRFKY…GDGLTEIGLD (235 aa)) constitute an ABC transporter domain. ATP is bound at residue 42 to 49 (GHNGSGKS).

It belongs to the ABC transporter superfamily. Energy-coupling factor EcfA family. Forms a stable energy-coupling factor (ECF) transporter complex composed of 2 membrane-embedded substrate-binding proteins (S component), 2 ATP-binding proteins (A component) and 2 transmembrane proteins (T component).

The protein localises to the cell membrane. ATP-binding (A) component of a common energy-coupling factor (ECF) ABC-transporter complex. Unlike classic ABC transporters this ECF transporter provides the energy necessary to transport a number of different substrates. The protein is Energy-coupling factor transporter ATP-binding protein EcfA1 of Staphylococcus saprophyticus subsp. saprophyticus (strain ATCC 15305 / DSM 20229 / NCIMB 8711 / NCTC 7292 / S-41).